The sequence spans 400 residues: Elongation factor Tu (400 aa).

In terms of domain architecture, tr-type G spans 10-209 (KPHVNIGTIG…NVDAYIPTPE (200 aa)). The segment at 19–26 (GHVDHGKT) is G1. Position 19–26 (19–26 (GHVDHGKT)) interacts with GTP. Position 26 (Thr-26) interacts with Mg(2+). The segment at 60–64 (GITIN) is G2. The segment at 81–84 (DCPG) is G3. GTP is bound by residues 81-85 (DCPGH) and 136-139 (NKSD). A G4 region spans residues 136 to 139 (NKSD). The tract at residues 174 to 176 (SGL) is G5.

Belongs to the TRAFAC class translation factor GTPase superfamily. Classic translation factor GTPase family. EF-Tu/EF-1A subfamily. Monomer.

It localises to the cytoplasm. The catalysed reaction is GTP + H2O = GDP + phosphate + H(+). In terms of biological role, GTP hydrolase that promotes the GTP-dependent binding of aminoacyl-tRNA to the A-site of ribosomes during protein biosynthesis. In Desulforamulus reducens (strain ATCC BAA-1160 / DSM 100696 / MI-1) (Desulfotomaculum reducens), this protein is Elongation factor Tu.